The sequence spans 146 residues: UPF0178 protein LMOf2365_1475 (146 aa).

This sequence belongs to the UPF0178 family.

In Listeria monocytogenes serotype 4b (strain F2365), this protein is UPF0178 protein LMOf2365_1475.